Reading from the N-terminus, the 341-residue chain is MASADDRRFEVLRAIVADYVTTKEPIGSKALVDRHGLGVSSATVRNDMAVLEAEGYIAQPHTSSGRVPTEKGYREFVNRLEDVKPLSGAERKAILNFLEGGVDLDDVLRRAVRLLAQMTRQVAVVQYPTLSSSSVRHLEVVSLSPARLLLVVITDTGRVDQRIVELGDVINDEQLGRLRVLLGAALDGKKLSAASVAVAELAEQSDDDLRDPITRAATVLVETLVEHHEERLLLGGTANLTRNAADFGGQLRTVLEALEEQVVVLRLLAAQQEAGRVTVHIGHETAAEQMIGTSVVSTPYGAGGAVFGGMGVLGPTRMDYPGTIANVAAVAMYIGEVLANR.

Belongs to the HrcA family.

Functionally, negative regulator of class I heat shock genes (grpE-dnaK-dnaJ and groELS operons). Prevents heat-shock induction of these operons. This chain is Heat-inducible transcription repressor HrcA, found in Mycobacteroides abscessus (strain ATCC 19977 / DSM 44196 / CCUG 20993 / CIP 104536 / JCM 13569 / NCTC 13031 / TMC 1543 / L948) (Mycobacterium abscessus).